A 170-amino-acid polypeptide reads, in one-letter code: Photosystem II extrinsic protein V (170 aa).

The first 33 residues, 1–33 (MASLFASLGRSLIKLLIVLPVIIGLSISSPAMA), serve as a signal peptide directing secretion. Positions 70, 73, 74, and 125 each coordinate heme c.

It belongs to the cytochrome c family. PsbV subfamily. PSII is composed of 1 copy each of membrane proteins PsbA, PsbB, PsbC, PsbD, PsbE, PsbF, PsbH, PsbI, PsbJ, PsbK, PsbL, PsbM, PsbT, PsbX, PsbY, Psb30/Ycf12, peripheral proteins PsbO, CyanoQ (PsbQ), PsbU, PsbV and a large number of cofactors. It forms dimeric complexes. The cofactor is heme c.

The protein localises to the cellular thylakoid membrane. In terms of biological role, one of the extrinsic, lumenal subunits of photosystem II (PSII). PSII is a light-driven water plastoquinone oxidoreductase, using light energy to abstract electrons from H(2)O, generating a proton gradient subsequently used for ATP formation. The extrinsic proteins stabilize the structure of photosystem II oxygen-evolving complex (OEC), the ion environment of oxygen evolution and protect the OEC against heat-induced inactivation. Low-potential cytochrome c that plays a role in the OEC of PSII. The chain is Photosystem II extrinsic protein V from Prochlorococcus marinus (strain MIT 9313).